We begin with the raw amino-acid sequence, 723 residues long: Enolase-phosphatase E1 (723 aa).

Residues 126 to 127 (SS) and K160 contribute to the substrate site. The tract at residues 239 to 723 (GAGAKRKIDE…TPTPPIEAES (485 aa)) is disordered. 2 stretches are compositionally biased toward basic and acidic residues: residues 262 to 284 (VKKD…DEPA) and 293 to 308 (AAKE…KMEV). Positions 311–320 (AAAAAAPPAD) are enriched in low complexity. 6 stretches are compositionally biased toward basic and acidic residues: residues 322-406 (AEEK…VVEE), 419-443 (AEEK…KPAE), 468-479 (EPAKEKPAEAEA), 487-496 (TKAEVVEKPA), 511-565 (SADK…KGEE), and 577-593 (VEAK…KSDA). Low complexity-rich tracts occupy residues 596-606 (VSTTTTTTSTE) and 636-647 (NGEAEPAAEAVV). Over residues 653–666 (GKHEEKGDSDKEND) the composition is skewed to basic and acidic residues.

It belongs to the HAD-like hydrolase superfamily. MasA/MtnC family. Monomer.

The protein localises to the cytoplasm. It localises to the nucleus. The catalysed reaction is 5-methylsulfanyl-2,3-dioxopentyl phosphate + H2O = 1,2-dihydroxy-5-(methylsulfanyl)pent-1-en-3-one + phosphate. The protein operates within amino-acid biosynthesis; L-methionine biosynthesis via salvage pathway; L-methionine from S-methyl-5-thio-alpha-D-ribose 1-phosphate: step 3/6. Its pathway is amino-acid biosynthesis; L-methionine biosynthesis via salvage pathway; L-methionine from S-methyl-5-thio-alpha-D-ribose 1-phosphate: step 4/6. Its function is as follows. Bifunctional enzyme that catalyzes the enolization of 2,3-diketo-5-methylthiopentyl-1-phosphate (DK-MTP-1-P) into the intermediate 2-hydroxy-3-keto-5-methylthiopentenyl-1-phosphate (HK-MTPenyl-1-P), which is then dephosphorylated to form the acireductone 1,2-dihydroxy-3-keto-5-methylthiopentene (DHK-MTPene). The chain is Enolase-phosphatase E1 from Culex quinquefasciatus (Southern house mosquito).